A 307-amino-acid polypeptide reads, in one-letter code: Ornithine carbamoyltransferase (307 aa).

Carbamoyl phosphate-binding positions include 53–56 (STRT), Gln80, Arg104, and 131–134 (HPCQ). L-ornithine-binding positions include Asn162, Asp219, and 223 to 224 (SM). Carbamoyl phosphate-binding positions include 259–260 (CL) and Arg287.

It belongs to the aspartate/ornithine carbamoyltransferase superfamily. OTCase family.

It localises to the cytoplasm. The catalysed reaction is carbamoyl phosphate + L-ornithine = L-citrulline + phosphate + H(+). It functions in the pathway amino-acid biosynthesis; L-arginine biosynthesis; L-arginine from L-ornithine and carbamoyl phosphate: step 1/3. Reversibly catalyzes the transfer of the carbamoyl group from carbamoyl phosphate (CP) to the N(epsilon) atom of ornithine (ORN) to produce L-citrulline. In Psychrobacter arcticus (strain DSM 17307 / VKM B-2377 / 273-4), this protein is Ornithine carbamoyltransferase.